Consider the following 37-residue polypeptide: Large ribosomal subunit protein bL36 (37 aa).

This sequence belongs to the bacterial ribosomal protein bL36 family.

This Magnetococcus marinus (strain ATCC BAA-1437 / JCM 17883 / MC-1) protein is Large ribosomal subunit protein bL36.